A 248-amino-acid polypeptide reads, in one-letter code: Phosphoribosylaminoimidazole-succinocarboxamide synthase (248 aa).

The protein belongs to the SAICAR synthetase family.

The catalysed reaction is 5-amino-1-(5-phospho-D-ribosyl)imidazole-4-carboxylate + L-aspartate + ATP = (2S)-2-[5-amino-1-(5-phospho-beta-D-ribosyl)imidazole-4-carboxamido]succinate + ADP + phosphate + 2 H(+). It functions in the pathway purine metabolism; IMP biosynthesis via de novo pathway; 5-amino-1-(5-phospho-D-ribosyl)imidazole-4-carboxamide from 5-amino-1-(5-phospho-D-ribosyl)imidazole-4-carboxylate: step 1/2. The sequence is that of Phosphoribosylaminoimidazole-succinocarboxamide synthase (purC) from Methanothermobacter thermautotrophicus (strain ATCC 29096 / DSM 1053 / JCM 10044 / NBRC 100330 / Delta H) (Methanobacterium thermoautotrophicum).